The sequence spans 480 residues: Cyclin L homolog cyl-1 (480 aa).

Residues 25-58 (PKEQNGNVEPKKEEDEKFESTYKQNENTQITPSS) form a disordered region. Residues 33–44 (EPKKEEDEKFES) show a composition bias toward basic and acidic residues. Positions 45–58 (TYKQNENTQITPSS) are enriched in polar residues. The Cyclin N-terminal domain maps to 91 to 230 (PSLVDGLSKE…RRILATLGFV (140 aa)). The segment at 368-480 (KMAPDGEKST…ESSTPPRSRR (113 aa)) is disordered. Composition is skewed to basic and acidic residues over residues 384–409 (KDSR…GKKE) and 418–442 (NDRD…DEKK). The span at 443–453 (DRRKRTRSRSR) shows a compositional bias: basic residues. Residues 454–472 (DRKDKNRNRDVGKRYRKES) show a composition bias toward basic and acidic residues.

It belongs to the cyclin family.

Its function is as follows. Involved in pre-mRNA splicing. Functions in association with cyclin-dependent kinases (CDKs). Involved in induction of expression of heat shock protein hsp-16.2 in response to heat shock. Plays a role in male tail development, perhaps acting together with cell cycle regulators cdc-25.2, cdk-1, cyb-3, and cyd-1. The polypeptide is Cyclin L homolog cyl-1 (Caenorhabditis elegans).